The following is a 394-amino-acid chain: Dual specificity protein phosphatase 4 (394 aa).

Val-2 bears the N-acetylvaline mark. In terms of domain architecture, Rhodanese spans Ser-41–Ser-159. A Tyrosine-protein phosphatase domain is found at Gly-195–Ala-336. Residue Cys-280 is the Phosphocysteine intermediate of the active site. 2 positions are modified to phosphoserine; by MAPK: Ser-386 and Ser-391.

Belongs to the protein-tyrosine phosphatase family. Non-receptor class dual specificity subfamily. Hollow spherical complex composed of 24 subunits with pseudooctahedral symmetry, has a tetramer as the basic unit. In terms of processing, phosphorylation in the C-terminus by ERK1/2 inhibits proteasomal degradation and stabilizes the protein.

It is found in the nucleus. It carries out the reaction O-phospho-L-tyrosyl-[protein] + H2O = L-tyrosyl-[protein] + phosphate. The catalysed reaction is O-phospho-L-seryl-[protein] + H2O = L-seryl-[protein] + phosphate. The enzyme catalyses O-phospho-L-threonyl-[protein] + H2O = L-threonyl-[protein] + phosphate. Its function is as follows. Regulates mitogenic signal transduction by dephosphorylating both Thr and Tyr residues on MAP kinases ERK1 and ERK2. The chain is Dual specificity protein phosphatase 4 (DUSP4) from Homo sapiens (Human).